Consider the following 189-residue polypeptide: Pyridoxal 5'-phosphate synthase subunit PdxT (189 aa).

47-49 (GES) lines the L-glutamine pocket. Cysteine 79 (nucleophile) is an active-site residue. L-glutamine-binding positions include arginine 106 and 135-136 (IR). Active-site charge relay system residues include histidine 171 and glutamate 173.

The protein belongs to the glutaminase PdxT/SNO family. In terms of assembly, in the presence of PdxS, forms a dodecamer of heterodimers. Only shows activity in the heterodimer.

The catalysed reaction is aldehydo-D-ribose 5-phosphate + D-glyceraldehyde 3-phosphate + L-glutamine = pyridoxal 5'-phosphate + L-glutamate + phosphate + 3 H2O + H(+). It carries out the reaction L-glutamine + H2O = L-glutamate + NH4(+). The protein operates within cofactor biosynthesis; pyridoxal 5'-phosphate biosynthesis. Functionally, catalyzes the hydrolysis of glutamine to glutamate and ammonia as part of the biosynthesis of pyridoxal 5'-phosphate. The resulting ammonia molecule is channeled to the active site of PdxS. The sequence is that of Pyridoxal 5'-phosphate synthase subunit PdxT from Desulforudis audaxviator (strain MP104C).